A 603-amino-acid polypeptide reads, in one-letter code: Growth-regulating factor 6 (603 aa).

Residues 34 to 58 (KHGRGNAGDQEHEWRPPAKQARGGD) are disordered. A QLQ domain is found at 158–193 (PFTPSQWIELEHQALIYKYLAANSPVPHSLLIPIRR). The WRC domain maps to 223-267 (DPEPGRCRRTDGKKWRCSRDAVADQKYCERHMNRGRHRSRKHVEG). Short sequence motifs (bipartite nuclear localization signal) lie at residues 228-238 (RCRRTDGKKWR) and 256-263 (RGRHRSRK). Residues 561–571 (FGSVSSSTGSS) show a composition bias toward low complexity. A disordered region spans residues 561–582 (FGSVSSSTGSSPRLENHSVYDG).

This sequence belongs to the GRF family.

It is found in the nucleus. In terms of biological role, transcription activator that plays a regulatory role in gibberellin-induced stem elongation. The chain is Growth-regulating factor 6 (GRF6) from Oryza sativa subsp. japonica (Rice).